Here is a 387-residue protein sequence, read N- to C-terminus: Protein REVEILLE 1 (387 aa).

Composition is skewed to polar residues over residues 1 to 17 (MASS…NASL) and 27 to 37 (KQIQFNDQSFG). Residues 1–44 (MASSPLTANVQGTNASLRNRDEETADKQIQFNDQSFGGNDYAPK) form a disordered region. An HTH myb-type domain is found at 50–104 (TITKERERWTDEEHKKFVEALKLYGRAWRRIEEHVGSKTAVQIRSHAQKFFSKVA). The segment at residues 77 to 100 (WRRIEEHVGSKTAVQIRSHAQKFF) is a DNA-binding region (H-T-H motif). 3 disordered regions span residues 105–200 (REAT…TANA), 306–334 (KAVQ…TTEP), and 350–387 (AFSE…HLHL). Residues 124–134 (RPKRKPAHPYP) show a composition bias toward basic residues. Polar residues predominate over residues 141 to 166 (ADQTSRSVSPSERDTQSPTSVLSTVG). Low complexity-rich tracts occupy residues 172–200 (SLDS…TANA) and 312–323 (GSSTGSNTGSVD). Residues 324–333 (DTGHTEKTTE) show a composition bias toward basic and acidic residues.

The protein resides in the nucleus. Morning-phased transcription factor integrating the circadian clock and auxin pathways. Binds to the evening element (EE) of promoters. Does not act within the central clock, but regulates free auxin levels in a time-of-day specific manner. Positively regulates the expression of YUC8 during the day, but has no effect during the night. Negative regulator of freezing tolerance. This Arabidopsis thaliana (Mouse-ear cress) protein is Protein REVEILLE 1 (RVE1).